The primary structure comprises 283 residues: Pantothenate synthetase (283 aa).

30–37 (MGALHEGH) is an ATP binding site. Catalysis depends on His37, which acts as the Proton donor. Gln61 is a binding site for (R)-pantoate. A beta-alanine-binding site is contributed by Gln61. 147-150 (GEKD) contributes to the ATP binding site. Residue Gln153 participates in (R)-pantoate binding. ATP is bound by residues Ile176 and 184–187 (VSSR).

The protein belongs to the pantothenate synthetase family. In terms of assembly, homodimer.

It localises to the cytoplasm. It carries out the reaction (R)-pantoate + beta-alanine + ATP = (R)-pantothenate + AMP + diphosphate + H(+). It participates in cofactor biosynthesis; (R)-pantothenate biosynthesis; (R)-pantothenate from (R)-pantoate and beta-alanine: step 1/1. In terms of biological role, catalyzes the condensation of pantoate with beta-alanine in an ATP-dependent reaction via a pantoyl-adenylate intermediate. The chain is Pantothenate synthetase from Chlorobium phaeobacteroides (strain DSM 266 / SMG 266 / 2430).